We begin with the raw amino-acid sequence, 93 residues long: MKTLLLTLVVVTIVCLDLGYTTKCYVTPDVKSETCPAGQDICYTETWCDAWCTSRGKRVNLGCAATCPIVKPGVEIKCCSTDNCNPFPTRKRP.

Residues 1 to 21 (MKTLLLTLVVVTIVCLDLGYT) form the signal peptide. 5 cysteine pairs are disulfide-bonded: C24/C42, C35/C63, C48/C52, C67/C78, and C79/C84.

This sequence belongs to the three-finger toxin family. Long-chain subfamily. Type II alpha-neurotoxin sub-subfamily. In terms of tissue distribution, expressed by the venom gland.

The protein localises to the secreted. Functionally, binds to muscular and neuronal nicotinic acetylcholine receptor (nAChR) and inhibits acetylcholine from binding to the receptor, thereby impairing neuromuscular and neuronal transmission. Pseudo-irreversibly inhibits twitches in chick biventer cervicis nerve-muscle preparations in a concentration-dependent manner. In Ophiophagus hannah (King cobra), this protein is Alpha-elapitoxin-Oh3a.